The following is a 3461-amino-acid chain: Abnormal spindle-like microcephaly-associated protein homolog (3461 aa).

Residues Met1–Glu30 are disordered. Phosphoserine occurs at positions 279, 282, 367, 392, 426, and 606. The region spanning Lys921–Gln1057 is the Calponin-homology (CH) 1 domain. Residues Val1058–Thr1077 are a coiled coil. A Phosphoserine modification is found at Ser1104. A Calponin-homology (CH) 2 domain is found at Ser1111–Leu1262. IQ domains lie at Glu1267–Ala1296, Gln1348–Gln1379, Leu1488–Thr1517, Arg1511–Ala1540, Lys1538–Ser1569, Leu1583–Gln1614, Thr1633–Lys1662, Ile1656–Lys1685, Met1729–Ser1758, Gln1752–Gln1783, Met1775–Arg1804, Val1802–Lys1831, Gln1825–Lys1854, Thr1875–Arg1904, Glu1898–Gln1929, Leu1948–Gln1979, Gln1971–Gln2002, Thr2021–Ala2050, Tyr2044–Gln2075, Leu2094–Lys2125, Met2117–Gln2148, Ile2167–Gln2198, Met2190–Thr2219, Leu2240–Gln2271, Leu2313–Gln2344, Met2336–Gln2367, Gln2386–Gln2417, Met2409–Gln2440, Val2459–Gln2490, Gln2532–Gln2563, Arg2666–Gln2697, Met2689–Gln2720, Leu2739–Ala2768, Gln2837–Thr2866, Gln2860–Gln2891, Val2910–Lys2939, Ile2933–Ala2964, Lys2955–Gln2986, Arg3030–Thr3059, Leu3080–His3111, Gln3182–Lys3211, and Ile3205–Ser3236.

The protein resides in the cytoplasm. Its subcellular location is the cytoskeleton. It is found in the spindle. It localises to the nucleus. Its function is as follows. Probable role in mitotic spindle regulation and coordination of mitotic processes. May have a preferential role in regulating neurogenesis. The polypeptide is Abnormal spindle-like microcephaly-associated protein homolog (ASPM) (Felis catus (Cat)).